The sequence spans 83 residues: MSHPEEMPVDGTLDATGLNCPEPVMMLHQHIRDLPPGGLLKVIATDPSTRRDIPKFCVFLDHELVDQQEQAGTYLYWIRKNSV.

Cys-20 (cysteine persulfide intermediate) is an active-site residue.

This sequence belongs to the sulfur carrier protein TusA family.

The protein localises to the cytoplasm. Sulfur carrier protein which probably makes part of a sulfur-relay system. This is Sulfur carrier protein TusA from Pseudomonas fluorescens (strain SBW25).